A 205-amino-acid chain; its full sequence is Large ribosomal subunit protein bL25 (205 aa).

The protein belongs to the bacterial ribosomal protein bL25 family. CTC subfamily. Part of the 50S ribosomal subunit; part of the 5S rRNA/L5/L18/L25 subcomplex. Contacts the 5S rRNA. Binds to the 5S rRNA independently of L5 and L18.

Its function is as follows. This is one of the proteins that binds to the 5S RNA in the ribosome where it forms part of the central protuberance. This Stutzerimonas stutzeri (strain A1501) (Pseudomonas stutzeri) protein is Large ribosomal subunit protein bL25.